The primary structure comprises 156 residues: SsrA-binding protein (156 aa).

It belongs to the SmpB family.

The protein resides in the cytoplasm. Functionally, required for rescue of stalled ribosomes mediated by trans-translation. Binds to transfer-messenger RNA (tmRNA), required for stable association of tmRNA with ribosomes. tmRNA and SmpB together mimic tRNA shape, replacing the anticodon stem-loop with SmpB. tmRNA is encoded by the ssrA gene; the 2 termini fold to resemble tRNA(Ala) and it encodes a 'tag peptide', a short internal open reading frame. During trans-translation Ala-aminoacylated tmRNA acts like a tRNA, entering the A-site of stalled ribosomes, displacing the stalled mRNA. The ribosome then switches to translate the ORF on the tmRNA; the nascent peptide is terminated with the 'tag peptide' encoded by the tmRNA and targeted for degradation. The ribosome is freed to recommence translation, which seems to be the essential function of trans-translation. The sequence is that of SsrA-binding protein from Bacillus pumilus (strain SAFR-032).